The sequence spans 148 residues: Deoxyuridine 5'-triphosphate nucleotidohydrolase (148 aa).

Substrate contacts are provided by residues 68–70 (RSG), asparagine 81, 85–87 (TVD), and lysine 95.

The protein belongs to the dUTPase family. It depends on Mg(2+) as a cofactor.

The catalysed reaction is dUTP + H2O = dUMP + diphosphate + H(+). It participates in pyrimidine metabolism; dUMP biosynthesis; dUMP from dCTP (dUTP route): step 2/2. This enzyme is involved in nucleotide metabolism: it produces dUMP, the immediate precursor of thymidine nucleotides and it decreases the intracellular concentration of dUTP so that uracil cannot be incorporated into DNA. The polypeptide is Deoxyuridine 5'-triphosphate nucleotidohydrolase (Caldanaerobacter subterraneus subsp. tengcongensis (strain DSM 15242 / JCM 11007 / NBRC 100824 / MB4) (Thermoanaerobacter tengcongensis)).